The sequence spans 370 residues: Quinolinate synthase (370 aa).

2 residues coordinate iminosuccinate: His62 and Ser83. Residue Cys128 coordinates [4Fe-4S] cluster. Iminosuccinate contacts are provided by residues Tyr154 to Asn156 and Ser171. Cys215 provides a ligand contact to [4Fe-4S] cluster. Residues His241 to Glu243 and Thr258 each bind iminosuccinate. Residue Cys312 participates in [4Fe-4S] cluster binding.

Belongs to the quinolinate synthase family. Type 1 subfamily. Requires [4Fe-4S] cluster as cofactor.

It is found in the cytoplasm. It catalyses the reaction iminosuccinate + dihydroxyacetone phosphate = quinolinate + phosphate + 2 H2O + H(+). It participates in cofactor biosynthesis; NAD(+) biosynthesis; quinolinate from iminoaspartate: step 1/1. Catalyzes the condensation of iminoaspartate with dihydroxyacetone phosphate to form quinolinate. This is Quinolinate synthase from Neisseria meningitidis serogroup A / serotype 4A (strain DSM 15465 / Z2491).